The sequence spans 380 residues: uncharacterized protein (380 aa).

HTH tetR-type domains follow at residues 3–63 and 201–262; these read ESAE…KEGL and VRTR…CAEI. Positions 225–244 form a DNA-binding region, H-T-H motif; sequence TISDITRKSNIRRATFYDHY.

This is an uncharacterized protein from Bacillus subtilis (strain 168).